Here is a 178-residue protein sequence, read N- to C-terminus: Protein GrpE (178 aa).

A disordered region spans residues 1–26; that stretch reads MQDQDKYAEQAASMEEPASADAPAIV.

This sequence belongs to the GrpE family. Homodimer.

The protein resides in the cytoplasm. In terms of biological role, participates actively in the response to hyperosmotic and heat shock by preventing the aggregation of stress-denatured proteins, in association with DnaK and GrpE. It is the nucleotide exchange factor for DnaK and may function as a thermosensor. Unfolded proteins bind initially to DnaJ; upon interaction with the DnaJ-bound protein, DnaK hydrolyzes its bound ATP, resulting in the formation of a stable complex. GrpE releases ADP from DnaK; ATP binding to DnaK triggers the release of the substrate protein, thus completing the reaction cycle. Several rounds of ATP-dependent interactions between DnaJ, DnaK and GrpE are required for fully efficient folding. This chain is Protein GrpE, found in Herminiimonas arsenicoxydans.